A 131-amino-acid chain; its full sequence is Fumarate reductase subunit C (131 aa).

3 helical membrane-spanning segments follow: residues 30 to 50 (EGTA…LFAL), 61 to 81 (IGFL…AAAL), and 110 to 130 (IKGL…VALF).

The protein belongs to the FrdC family. Part of an enzyme complex containing four subunits: a flavoprotein (FrdA), an iron-sulfur protein (FrdB), and two hydrophobic anchor proteins (FrdC and FrdD).

It is found in the cell inner membrane. Its function is as follows. Two distinct, membrane-bound, FAD-containing enzymes are responsible for the catalysis of fumarate and succinate interconversion; fumarate reductase is used in anaerobic growth, and succinate dehydrogenase is used in aerobic growth. Anchors the catalytic components of the fumarate reductase complex to the cell inner membrane, binds quinones. This is Fumarate reductase subunit C from Klebsiella pneumoniae (strain 342).